The sequence spans 586 residues: Zinc finger protein Eos (586 aa).

Disordered regions lie at residues 1 to 42 and 68 to 98; these read MHTP…APDF and EKEF…SANS. Positions 25 to 34 are enriched in basic and acidic residues; sequence QGKDNLEREL. Residues 79-98 show a composition bias toward polar residues; the sequence is SVSTPNSQHSSPSRSLSANS. K100 participates in a covalent cross-link: Glycyl lysine isopeptide (Lys-Gly) (interchain with G-Cter in SUMO2). At S105 the chain carries Phosphoserine. 4 C2H2-type zinc fingers span residues 159-181, 187-209, 215-237, and 248-271; these read LKCD…KRSH, FHCN…IKLH, FKCP…LRTH, and YKCN…ERCH. Residues 281-586 form an interaction with FOXP3 region; it reads AQALTGQPGD…HIVRGEHKVG (306 aa). At K335 the chain carries N6-acetyllysine. The disordered stretch occupies residues 413 to 490; it reads RLELPGSREA…QPPPTIVVGR (78 aa). Residues 423-433 carry the CTBP-binding motif PEDLG motif; that stretch reads GEGPEDLGDGG. A compositionally biased stretch (pro residues) spans 476–485; it reads QGPPPQPPPT. Residue K501 forms a Glycyl lysine isopeptide (Lys-Gly) (interchain with G-Cter in SUMO2) linkage. C2H2-type zinc fingers lie at residues 531-553 and 559-583; these read FKCE…MGCH and FECN…RGEH.

The protein belongs to the Ikaros C2H2-type zinc-finger protein family. As to quaternary structure, self-associates. Interacts with other family members; IKZF1, IKZF2, IKZF3 and IKZF5. Interacts with CTBP2, SPI1 and MITF. Interacts with FOXP3 and CTBP1. Expressed mainly in the brain. Up-regulated in long term cultured astrocytes. Down-regulated during osteoclast differentiation.

Its subcellular location is the nucleus. DNA-binding protein that binds to the 5'GGGAATRCC-3' Ikaros-binding sequence. Interacts with SPI1 and MITF to repress transcription of the CTSK and ACP5 promoters via recruitment of corepressors SIN3A and CTBP2. May be involved in the development of central and peripheral nervous systems. Essential for the inhibitory function of regulatory T-cells (Treg). Mediates FOXP3-mediated gene silencing in regulatory T-cells (Treg) via recruitment of corepressor CTBP1. This is Zinc finger protein Eos (Ikzf4) from Mus musculus (Mouse).